We begin with the raw amino-acid sequence, 372 residues long: UDP-N-acetylglucosamine--N-acetylmuramyl-(pentapeptide) pyrophosphoryl-undecaprenol N-acetylglucosamine transferase (372 aa).

UDP-N-acetyl-alpha-D-glucosamine is bound by residues 14–16, Asn-128, Arg-169, Ser-201, Ile-257, and Gln-302; that span reads TGG.

Belongs to the glycosyltransferase 28 family. MurG subfamily.

The protein resides in the cell inner membrane. It catalyses the reaction di-trans,octa-cis-undecaprenyl diphospho-N-acetyl-alpha-D-muramoyl-L-alanyl-D-glutamyl-meso-2,6-diaminopimeloyl-D-alanyl-D-alanine + UDP-N-acetyl-alpha-D-glucosamine = di-trans,octa-cis-undecaprenyl diphospho-[N-acetyl-alpha-D-glucosaminyl-(1-&gt;4)]-N-acetyl-alpha-D-muramoyl-L-alanyl-D-glutamyl-meso-2,6-diaminopimeloyl-D-alanyl-D-alanine + UDP + H(+). It functions in the pathway cell wall biogenesis; peptidoglycan biosynthesis. Functionally, cell wall formation. Catalyzes the transfer of a GlcNAc subunit on undecaprenyl-pyrophosphoryl-MurNAc-pentapeptide (lipid intermediate I) to form undecaprenyl-pyrophosphoryl-MurNAc-(pentapeptide)GlcNAc (lipid intermediate II). This is UDP-N-acetylglucosamine--N-acetylmuramyl-(pentapeptide) pyrophosphoryl-undecaprenol N-acetylglucosamine transferase from Bacteroides thetaiotaomicron (strain ATCC 29148 / DSM 2079 / JCM 5827 / CCUG 10774 / NCTC 10582 / VPI-5482 / E50).